The sequence spans 543 residues: Protein male-specific lethal-3 (543 aa).

A Chromo domain is found at 10 to 90; it reads LFNRGEKVLC…KLQRELAEAA (81 aa). The segment at 93–247 is disordered; it reads QKTGGYSYKD…THTTDAEKRI (155 aa). 3 stretches are compositionally biased toward basic and acidic residues: residues 180–202, 210–224, and 234–247; these read RSRD…DNSS, KSKG…ERRS, and SPKD…EKRI. One can recognise an MRG domain in the interval 249–542; the sequence is QEDRVMLRIS…PLIDQGRELS (294 aa).

As to quaternary structure, component of the male-specific lethal (MSL) histone acetyltransferase complex, composed of mof, mle, msl-1, msl-2 and msl-3 proteins, as well as roX1 and roX2 non-coding RNAs. Ubiquitinated by msl-2.

It localises to the nucleus. The protein localises to the chromosome. In terms of biological role, component of the male-specific lethal (MSL) histone acetyltransferase complex, a multiprotein complex essential for elevating transcription of the single X chromosome in the male (X chromosome dosage compensation). The MSL complex specifically associates with the single X chromosome in males and mediates formation of H4K16ac, promoting a two-fold activation of X chromosome. Acts as a histone reader that specifically recognizes and binds histone H3 trimethylated at 'Lys-36' (H3K36me3) and histone H4 monomethylated at 'Lys-20' (H4K20me1). Within the MSL complex, mediates the spreading of the MSL complex from initiation sites on the male X chromosome to flanking chromatin. Following initial recruitment of the MSL complex to male X chromosome by msl-2, msl-3 binds H3K36me3 and promotes spreading of the MSL complex in cis. In addition to its role in dosage compensation in males, promotes germline stem cell differentiation in females: recognizes and binds H3K36me3, promoting recruitment of the ATAC complex and transcription of genes, such as RpS19b. This chain is Protein male-specific lethal-3 (msl-3), found in Drosophila virilis (Fruit fly).